We begin with the raw amino-acid sequence, 117 residues long: Prefoldin subunit beta (117 aa).

It belongs to the prefoldin subunit beta family. In terms of assembly, heterohexamer of two alpha and four beta subunits.

Its subcellular location is the cytoplasm. Its function is as follows. Molecular chaperone capable of stabilizing a range of proteins. Seems to fulfill an ATP-independent, HSP70-like function in archaeal de novo protein folding. In Methanosarcina acetivorans (strain ATCC 35395 / DSM 2834 / JCM 12185 / C2A), this protein is Prefoldin subunit beta (pfdB).